Reading from the N-terminus, the 50-residue chain is Sperm protamine P1 (50 aa).

2 disulfides stabilise this stretch: C7–C15 and C39–C47.

It belongs to the protamine P1 family. As to quaternary structure, cross-linked by interchain disulfide bonds around the DNA-helix. Testis.

The protein resides in the nucleus. It localises to the chromosome. Functionally, protamines substitute for histones in the chromatin of sperm during the haploid phase of spermatogenesis. They compact sperm DNA into a highly condensed, stable and inactive complex. The sequence is that of Sperm protamine P1 (PRM1) from Sus scrofa (Pig).